Here is a 331-residue protein sequence, read N- to C-terminus: MNVAVIGAGRMGADHVRRLHESINNATVAAVVDIDLDRAKAATEGTGALAVASLAEAFAVEGVNAVLIATPGFLHEEALYQALQRDVPILCEKPMTPDAASAWRVVQAEVALGRQRIQVGFMRQFDAGYQSLKSEIEAGAAGSLLMLHCANRNASTLADFTEPMLINDSVVHEFDAIRFFTGEEITSVQVQVQVQVQVQVQVQRGKRSSLAPEGISDPQHVLIETESGILADVEIFVNARYGYEVATQAVFENGVRSIGAGEVTPSFIERFAAAYDAEVQAWVDAALHGEIGGPSAWDGYATAACCEAGVAAQRSGQRTAVVLAAKPELYR.

It belongs to the Gfo/Idh/MocA family. As to quaternary structure, homotetramer.

The catalysed reaction is myo-inositol + NAD(+) = scyllo-inosose + NADH + H(+). Functionally, involved in the oxidation of myo-inositol (MI) to 2-keto-myo-inositol (2KMI or 2-inosose). The polypeptide is Inositol 2-dehydrogenase (Renibacterium salmoninarum (strain ATCC 33209 / DSM 20767 / JCM 11484 / NBRC 15589 / NCIMB 2235)).